The chain runs to 572 residues: Ribonuclease Y (572 aa).

Residues M1–Q21 form a helical membrane-spanning segment. Disordered stretches follow at residues H59–E85 and Q110–D142. Basic and acidic residues-rich tracts occupy residues Q110–K119 and L129–D142. Positions S262 to L322 constitute a KH domain. Residues V388 to A481 form the HD domain.

It belongs to the RNase Y family.

It localises to the cell membrane. Functionally, endoribonuclease that initiates mRNA decay. In Deinococcus radiodurans (strain ATCC 13939 / DSM 20539 / JCM 16871 / CCUG 27074 / LMG 4051 / NBRC 15346 / NCIMB 9279 / VKM B-1422 / R1), this protein is Ribonuclease Y.